A 376-amino-acid chain; its full sequence is Lipid-A-disaccharide synthase (376 aa).

The protein belongs to the LpxB family.

It carries out the reaction a lipid X + a UDP-2-N,3-O-bis[(3R)-3-hydroxyacyl]-alpha-D-glucosamine = a lipid A disaccharide + UDP + H(+). Its pathway is bacterial outer membrane biogenesis; LPS lipid A biosynthesis. In terms of biological role, condensation of UDP-2,3-diacylglucosamine and 2,3-diacylglucosamine-1-phosphate to form lipid A disaccharide, a precursor of lipid A, a phosphorylated glycolipid that anchors the lipopolysaccharide to the outer membrane of the cell. This is Lipid-A-disaccharide synthase from Hydrogenovibrio crunogenus (strain DSM 25203 / XCL-2) (Thiomicrospira crunogena).